Here is a 377-residue protein sequence, read N- to C-terminus: Carboxynorspermidine/carboxyspermidine decarboxylase (377 aa).

An N6-(pyridoxal phosphate)lysine modification is found at Lys41. Substrate contacts are provided by Glu238 and Asp274.

It belongs to the Orn/Lys/Arg decarboxylase class-II family. NspC subfamily. Homodimer. The cofactor is pyridoxal 5'-phosphate.

Its subcellular location is the cytoplasm. The enzyme catalyses carboxynorspermidine + H(+) = norspermidine + CO2. It catalyses the reaction carboxyspermidine + H(+) = spermidine + CO2. With respect to regulation, dithiothreitol greatly stimulates activity, maximum stimulation being at 5-20 mM dithiothreitol concentration. Fe(3+), Fe(2+) and Mn(2+) severely inhibit activity (88%, 82% and 50%, respectively), whereas Zn(2+) has a slightly inhibitory effect (23%) and Mg(2+), Ca(2+), Cu(2+) and Cu(+) have no effect. Catalyzes the decarboxylation of carboxynorspermidine and carboxyspermidine. 2,3-diaminopropionic acid, 2,4-diaminobutyric acid, L-ornithine or L-lysine cannot serve as substrates. The polypeptide is Carboxynorspermidine/carboxyspermidine decarboxylase (Vibrio alginolyticus).